An 849-amino-acid polypeptide reads, in one-letter code: Aminopeptidase N (849 aa).

Residues glutamate 122 and 259 to 263 (GAMEN) each bind substrate. Residue histidine 294 participates in Zn(2+) binding. Glutamate 295 serves as the catalytic Proton acceptor. Zn(2+) contacts are provided by histidine 298 and glutamate 317.

This sequence belongs to the peptidase M1 family. As to quaternary structure, monomer. The cofactor is Zn(2+).

The protein localises to the cytoplasm. The enzyme catalyses Release of an N-terminal amino acid, Xaa-|-Yaa- from a peptide, amide or arylamide. Xaa is preferably Ala, but may be most amino acids including Pro (slow action). When a terminal hydrophobic residue is followed by a prolyl residue, the two may be released as an intact Xaa-Pro dipeptide.. Aminopeptidase with broad substrate specificity to several peptides. It has more affinity for oligopeptides than for dipeptides. It plays an essential role in the metabolism, it may be involved in nitrogen supply or protein turnover. This is Aminopeptidase N (pepN) from Lactococcus lactis subsp. lactis (Streptococcus lactis).